We begin with the raw amino-acid sequence, 1293 residues long: DNA repair protein complementing XP-C cells homolog (1293 aa).

Disordered stretches follow at residues 1–199 (MSDE…FEDK), 217–239 (ERTR…QAAT), 255–341 (QSVE…NISG), 514–640 (DLIP…SKCL), and 658–919 (LSSK…EPAK). Residues 18 to 30 (DEWKPSKDVKGGE) are compositionally biased toward basic and acidic residues. 3 positions are modified to phosphoserine: Ser-31, Ser-32, and Ser-37. Positions 31–43 (SSDDDDSDFDELQ) are enriched in acidic residues. The span at 51–60 (SSGRSSAVAG) shows a compositional bias: low complexity. Composition is skewed to polar residues over residues 101 to 130 (FPTS…SGAR) and 226 to 238 (RNVT…SQAA). Basic residues predominate over residues 288–301 (SKTKSTRIKRHTKT). Residues 313–335 (DTDDSDFEEVADADLSSDQDDGE) are compositionally biased toward acidic residues. Residues 520–578 (LRPDDKNKSQTVESERESEDEKPKKDKKAGKPAEKESSKSTISKEAEKKNNAKKAEAKP) are compositionally biased toward basic and acidic residues. A phosphoserine mark is found at Ser-533 and Ser-537. Over residues 580 to 594 (SKSTTKGSETTKSGT) the composition is skewed to low complexity. Positions 598–612 (VKKELSLSSKLVEKS) are enriched in basic and acidic residues. Over residues 658–692 (LSSKLVLKSKNQSSFSSNKSDTSFEENPSTSSSSK) the composition is skewed to low complexity. The span at 693–711 (SLKEETAKLSSSKLEDKKV) shows a compositional bias: basic and acidic residues. Polar residues predominate over residues 720–737 (KVQSSLLKRVTTQNISES). Residues 806–818 (HLQEQRNTRETRS) show a composition bias toward basic and acidic residues. A phosphoserine mark is found at Ser-908 and Ser-911. 3 consecutive short sequence motifs (nuclear localization signal) follow at residues 922–938 (KKAP…RKDR), 1195–1211 (KKTV…ICKK), and 1275–1291 (KKLI…KKKY).

It belongs to the XPC family. As to quaternary structure, heterodimer.

Its subcellular location is the nucleus. Its function is as follows. Involved in DNA excision repair. May play a part in DNA damage recognition and/or in altering chromatin structure to allow access by damage-processing enzymes. Involved in nucleotide excision repair of DNA damaged with UV light, bulky adducts, or cross-linking agents. This is DNA repair protein complementing XP-C cells homolog from Drosophila melanogaster (Fruit fly).